We begin with the raw amino-acid sequence, 116 residues long: Methionine-R-sulfoxide reductase B1 (116 aa).

Residues 1–106 (MSFCSFFGGE…FSSSLKFVPK (106 aa)) enclose the MsrB domain. Residues Cys-23, Cys-26, Cys-71, and Cys-74 each contribute to the Zn(2+) site. Sec-95 functions as the Nucleophile in the catalytic mechanism. Residue Sec-95 is a non-standard amino acid, selenocysteine.

This sequence belongs to the MsrB Met sulfoxide reductase family. Requires Zn(2+) as cofactor. Truncated MSRB1/SEPX1 proteins produced by failed UGA/Sec decoding are ubiquitinated by the CRL2(FEM1C) E3 ubiquitin-protein ligase complex.

It is found in the cytoplasm. The protein resides in the nucleus. The protein localises to the cytoskeleton. The catalysed reaction is L-methionyl-[protein] + [thioredoxin]-disulfide + H2O = L-methionyl-(R)-S-oxide-[protein] + [thioredoxin]-dithiol. The enzyme catalyses [thioredoxin]-disulfide + L-methionine + H2O = L-methionine (R)-S-oxide + [thioredoxin]-dithiol. Its function is as follows. Methionine-sulfoxide reductase that specifically reduces methionine (R)-sulfoxide back to methionine. While in many cases, methionine oxidation is the result of random oxidation following oxidative stress, methionine oxidation is also a post-translational modification that takes place on specific residue. Acts as a regulator of actin assembly by reducing methionine (R)-sulfoxide mediated by MICALs (MICAL1, MICAL2 or MICAL3) on actin, thereby promoting filament repolymerization. Plays a role in innate immunity by reducing oxidized actin, leading to actin repolymerization in macrophages. The chain is Methionine-R-sulfoxide reductase B1 (Msrb1) from Mus musculus (Mouse).